We begin with the raw amino-acid sequence, 272 residues long: Cell shape-determining protein MreC (272 aa).

The Cytoplasmic portion of the chain corresponds to 1–8 (MNRFKKSK). Residues 9–29 (YVIIVFVTVLLVSALLATTYS) traverse the membrane as a helical segment. Topologically, residues 30 to 272 (STIVTKLGDG…VDVIELVGNS (243 aa)) are extracellular. Residues 64–112 (LTRTYNENESLKKQLYQLEVKSNEVESLKTENEQLRQLLDMKSKLQATK) are a coiled coil.

This sequence belongs to the MreC family. In terms of assembly, homodimer. Interacts with a number of proteins in the elongasome, including PBP1a (pbpA), PBP1b, PBP2a, PBP2b (penA), StkP, MltG, MreD and RodZ.

The protein resides in the cell membrane. In terms of biological role, involved in formation and maintenance of cell shape, probably part of the elongasome which synthesizes peripheral peptidoglycan (PG). The sequence is that of Cell shape-determining protein MreC from Streptococcus pneumoniae (strain ATCC BAA-255 / R6).